The chain runs to 186 residues: Peptidyl-tRNA hydrolase (186 aa).

Tyrosine 14 contacts tRNA. Residue histidine 19 is the Proton acceptor of the active site. TRNA contacts are provided by tyrosine 64, asparagine 66, and asparagine 112.

This sequence belongs to the PTH family. In terms of assembly, monomer.

It is found in the cytoplasm. The catalysed reaction is an N-acyl-L-alpha-aminoacyl-tRNA + H2O = an N-acyl-L-amino acid + a tRNA + H(+). In terms of biological role, hydrolyzes ribosome-free peptidyl-tRNAs (with 1 or more amino acids incorporated), which drop off the ribosome during protein synthesis, or as a result of ribosome stalling. Catalyzes the release of premature peptidyl moieties from peptidyl-tRNA molecules trapped in stalled 50S ribosomal subunits, and thus maintains levels of free tRNAs and 50S ribosomes. This chain is Peptidyl-tRNA hydrolase, found in Bacillus anthracis.